We begin with the raw amino-acid sequence, 1160 residues long: Protein translocase subunit SecA (1160 aa).

ATP contacts are provided by residues Gln162 and 180 to 184; that span reads GEGKT. The interval 342–362 is disordered; it reads LLEEKEEAEEEGDSRRAQELE. Over residues 344–353 the composition is skewed to acidic residues; it reads EEKEEAEEEG. Asp726 is an ATP binding site. The disordered stretch occupies residues 1060–1134; the sequence is EVQTEGQGPR…RNEYVTVRNN (75 aa). Over residues 1074–1083 the composition is skewed to polar residues; the sequence is QRNAQTQHDS. Residues 1104 to 1115 show a composition bias toward basic and acidic residues; sequence AAERDPTVEEKQ.

This sequence belongs to the SecA family. Monomer and homodimer. Part of the essential Sec protein translocation apparatus which comprises SecA, SecYEG and auxiliary proteins SecDF. Other proteins may also be involved.

It localises to the cell inner membrane. It is found in the cytoplasm. The catalysed reaction is ATP + H2O + cellular proteinSide 1 = ADP + phosphate + cellular proteinSide 2.. Functionally, part of the Sec protein translocase complex. Interacts with the SecYEG preprotein conducting channel. Has a central role in coupling the hydrolysis of ATP to the transfer of proteins into and across the cell membrane, serving as an ATP-driven molecular motor driving the stepwise translocation of polypeptide chains across the membrane. This Salinibacter ruber (strain DSM 13855 / M31) protein is Protein translocase subunit SecA.